The primary structure comprises 321 residues: MLSYDRILNFVIGARGIGKSYAMKKHPIKRFIKHGEQFIYVRRYKPELKKIGNYFNDIAQEFPNHEFKVKGRQFCIDGKLTGWAIPLSAWQSEKSNAYPMVTTIIFDEFIRERDNSGYIPNEVDALLNLMDTVFRTRENGRCICLSNAVSIINPYFVYFGLVPDINKRFNAYKHILIEIPDSKDFSDERRKTKFGQLIDGTEYGEMSLDNEFVNDSDVFIEKRSKNSKFVFSIVYKGMRMGVWVDTQQMLLYLTTDHDPSTKNVYALTADDLEEGMILVSNYKKNYHIRKLCSAFMNGQLRFDNQLMRTIGYEMFKKMRVQ.

The interval 1–196 is ATPase; that stretch reads MLSYDRILNF…DERRKTKFGQ (196 aa). 13–20 contacts ATP; it reads GARGIGKS. The segment at 222-321 is DNA-binding; that stretch reads KRSKNSKFVF…YEMFKKMRVQ (100 aa).

It belongs to the phi29likevirus gp16 family. Homopentamer. Interacts with the packaging RNA (pRNA). Part of a DNA-gp3-gp16 complex.

It carries out the reaction ATP + H2O = ADP + phosphate + H(+). Functionally, ATPase required for the genome encapsidation reaction. Part of the active packaging motor via the binding to the packaging RNA (pRNA), itself fixed to the head-tail connector at the unique portal vertex of the prohead. Binds and supercoils the pre-formed, unit-length DNA bound to gp3 to produce an initiation complex for DNA packaging. Provides the energy to actively pump the viral DNA into the prohead. Approximately one molecule of ATP is used in the packaging of 2 bp of viral DNA. ATP hydrolysis results in a conformational change that causes the arginine/lysine finger of one subunit to move into the active site of its neighbor, where it interacts with the negatively charged oxygens on the gamma-phosphate of ATP. After packaging, the ATPase and the pRNA are released from the prohead. This Bacillus subtilis (Bacteriophage B103) protein is DNA packaging protein (16).